The following is a 368-amino-acid chain: 3-dehydroquinate synthase (368 aa).

NAD(+) contacts are provided by residues 76-81, 110-114, 134-135, K147, K156, and 174-177; these read DGEQYK, GVIGD, TT, and CLKT. 3 residues coordinate Zn(2+): E189, H252, and H269.

Belongs to the sugar phosphate cyclases superfamily. Dehydroquinate synthase family. The cofactor is NAD(+). Requires Co(2+) as cofactor. Zn(2+) serves as cofactor.

Its subcellular location is the cytoplasm. The enzyme catalyses 7-phospho-2-dehydro-3-deoxy-D-arabino-heptonate = 3-dehydroquinate + phosphate. It participates in metabolic intermediate biosynthesis; chorismate biosynthesis; chorismate from D-erythrose 4-phosphate and phosphoenolpyruvate: step 2/7. Catalyzes the conversion of 3-deoxy-D-arabino-heptulosonate 7-phosphate (DAHP) to dehydroquinate (DHQ). This is 3-dehydroquinate synthase from Vibrio vulnificus (strain YJ016).